A 353-amino-acid chain; its full sequence is Nicotinate-nucleotide--dimethylbenzimidazole phosphoribosyltransferase (353 aa).

E319 serves as the catalytic Proton acceptor.

The protein belongs to the CobT family.

It carries out the reaction 5,6-dimethylbenzimidazole + nicotinate beta-D-ribonucleotide = alpha-ribazole 5'-phosphate + nicotinate + H(+). Its pathway is nucleoside biosynthesis; alpha-ribazole biosynthesis; alpha-ribazole from 5,6-dimethylbenzimidazole: step 1/2. Its function is as follows. Catalyzes the synthesis of alpha-ribazole-5'-phosphate from nicotinate mononucleotide (NAMN) and 5,6-dimethylbenzimidazole (DMB). In Syntrophobacter fumaroxidans (strain DSM 10017 / MPOB), this protein is Nicotinate-nucleotide--dimethylbenzimidazole phosphoribosyltransferase.